The following is a 584-amino-acid chain: Myo-inositol transporter 1 (584 aa).

The Cytoplasmic segment spans residues 1-81; it reads MGIHIPYLTS…TSVMITFNQS (81 aa). Threonine 12 is modified (phosphothreonine). The disordered stretch occupies residues 13–42; that stretch reads SQSNVGDAVGNADSVEFNSEHDSPSKRGKI. A phosphoserine mark is found at serine 26, serine 31, serine 35, serine 37, and serine 46. The span at 30–42 shows a compositional bias: basic and acidic residues; sequence NSEHDSPSKRGKI. A helical transmembrane segment spans residues 82-102; that stretch reads LSPFIITLTFVASISGFMFGY. At 103–129 the chain is on the extracellular side; the sequence is DTGYISSALISIGTDLDHKVLTYGEKE. A helical transmembrane segment spans residues 130-150; it reads IVTAATSLGALITSIFAGTAA. Over 151 to 163 the chain is Cytoplasmic; that stretch reads DIFGRKRCLMGSN. The helical transmembrane segment at 164–184 threads the bilayer; the sequence is LMFVIGAILQVSAHTFWQMAV. Topologically, residues 185-186 are extracellular; sequence GR. A helical membrane pass occupies residues 187 to 207; that stretch reads LIMGFGVGIGSLIAPLFISEI. Topologically, residues 208–215 are cytoplasmic; that stretch reads APKMIRGR. The chain crosses the membrane as a helical span at residues 216–236; that stretch reads LTVINSLWLTGGQLVAYGCGA. Residues 237-246 lie on the Extracellular side of the membrane; it reads GLNYVNNGWR. Residues 247 to 267 traverse the membrane as a helical segment; that stretch reads ILVGLSLIPTAVQFTCLCFLP. Residues 268 to 349 lie on the Cytoplasmic side of the membrane; the sequence is DTPRYYVMKG…IGCGLQAIQQ (82 aa). A helical membrane pass occupies residues 350–370; that stretch reads FTGWNSLMYFSGTIFETVGFK. N-linked (GlcNAc...) asparagine glycosylation is present at asparagine 371. At 371 to 376 the chain is on the extracellular side; that stretch reads NSSAVS. The chain crosses the membrane as a helical span at residues 377-397; the sequence is IIVSGTNFIFTLVAFFSIDKI. Residues 398–400 are Cytoplasmic-facing; that stretch reads GRR. The helical transmembrane segment at 401–421 threads the bilayer; that stretch reads TILLIGLPGMTMALVVCSIAF. Topologically, residues 422-441 are extracellular; it reads HFLGIKFDGAVAVVVSSGFS. A helical membrane pass occupies residues 442–462; that stretch reads SWGIVIIVFIIVFAAFYALGI. Over 463-486 the chain is Cytoplasmic; it reads GTVPWQQSELFPQNVRGIGTSYAT. The chain crosses the membrane as a helical span at residues 487–507; it reads ATNWAGSLVIASTFLTMLQNI. Residues 508–510 lie on the Extracellular side of the membrane; the sequence is TPA. A helical transmembrane segment spans residues 511–531; the sequence is GTFAFFAGLSCLSTIFCYFCY. Residues 532–584 are Cytoplasmic-facing; sequence PELSGLELEEVQTILKDGFNIKASKALAKKRKQQVARVHELKYEPTQEIIEDI. A Glycyl lysine isopeptide (Lys-Gly) (interchain with G-Cter in ubiquitin) cross-link involves residue lysine 573.

Belongs to the major facilitator superfamily. Sugar transporter (TC 2.A.1.1) family.

The protein resides in the cell membrane. The enzyme catalyses myo-inositol(out) + H(+)(out) = myo-inositol(in) + H(+)(in). In terms of biological role, major transporter for myo-inositol. This chain is Myo-inositol transporter 1 (ITR1), found in Saccharomyces cerevisiae (strain ATCC 204508 / S288c) (Baker's yeast).